The sequence spans 375 residues: MEKFYTSLGLMSGTSMDGVDASIIRSDGESNYEPIFDKYFEYDGVIYSNLLNLRDKINSIKDLQDNSYQINELERKITLFHAKISKEIIKNAGVDVDIVGFHGQTIFHNAQEKISKQIGDGNLLSSLLKKNVVYNFRENDIHNGGQGAPLAPIFHNLLINQNKIEKPACVLNIGGIANITLVISKNNEDLKSFDVGPGNCLLDEWVRRHTQMKYDENGKASNLGKTSEVILNQAIDNFDNISNQKKLSFDIKDFDLSFVKGLTYEDGLSTLVDFTAIIIYQSILKSINSEENKKLLIIVCGGGRKNLSLMESIRKRLPKNIYLKIIDDYKVDGDFIESQAFAYLAIRSALKKVISFPNTTNVKKPSIGGVLVKNY.

Residue G13 to D20 participates in ATP binding.

The protein belongs to the anhydro-N-acetylmuramic acid kinase family.

The enzyme catalyses 1,6-anhydro-N-acetyl-beta-muramate + ATP + H2O = N-acetyl-D-muramate 6-phosphate + ADP + H(+). Its pathway is amino-sugar metabolism; 1,6-anhydro-N-acetylmuramate degradation. The protein operates within cell wall biogenesis; peptidoglycan recycling. Its function is as follows. Catalyzes the specific phosphorylation of 1,6-anhydro-N-acetylmuramic acid (anhMurNAc) with the simultaneous cleavage of the 1,6-anhydro ring, generating MurNAc-6-P. Is required for the utilization of anhMurNAc either imported from the medium or derived from its own cell wall murein, and thus plays a role in cell wall recycling. In Pelagibacter ubique (strain HTCC1062), this protein is Anhydro-N-acetylmuramic acid kinase.